Here is a 165-residue protein sequence, read N- to C-terminus: Glycine cleavage system H protein, mitochondrial (165 aa).

The N-terminal 34 residues, methionine 1–phenylalanine 34, are a transit peptide targeting the mitochondrion. In terms of domain architecture, Lipoyl-binding spans valine 56–lysine 138. An N6-lipoyllysine modification is found at lysine 97.

The protein belongs to the GcvH family. As to quaternary structure, the glycine cleavage system is composed of four proteins: P, T, L and H. Requires (R)-lipoate as cofactor.

The protein localises to the mitochondrion. Functionally, the glycine cleavage system catalyzes the degradation of glycine. The H protein shuttles the methylamine group of glycine from the P protein to the T protein. The sequence is that of Glycine cleavage system H protein, mitochondrial (GDCSH) from Pisum sativum (Garden pea).